The following is a 381-amino-acid chain: Cytochrome b (381 aa).

Helical transmembrane passes span 34 to 54 (FGSLLGLCLIIQILTGLFLAM), 78 to 99 (WLIRNIHANGASLFFICVYLHI), 114 to 134 (WNIGVILLFLLMATAFVGYVL), and 179 to 199 (FFAFHFLLPFLILALTIIHLL). The heme b site is built by His-84 and His-98. Residues His-183 and His-197 each contribute to the heme b site. An a ubiquinone-binding site is contributed by His-202. 4 consecutive transmembrane segments (helical) span residues 227-247 (YKDLLGFFVMIFFLTTLALFM), 289-309 (LGGVLALLFSIFILMLVPLLH), 321-341 (LTQIFFWLLVANSIILTWIGG), and 348-368 (FITVGQIASVSYFSLFLIIMP).

This sequence belongs to the cytochrome b family. As to quaternary structure, the cytochrome bc1 complex contains 3 respiratory subunits (MT-CYB, CYC1 and UQCRFS1), 2 core proteins (UQCRC1 and UQCRC2) and probably 6 low-molecular weight proteins. The cofactor is heme b.

The protein resides in the mitochondrion inner membrane. Functionally, component of the ubiquinol-cytochrome c reductase complex (complex III or cytochrome b-c1 complex) that is part of the mitochondrial respiratory chain. The b-c1 complex mediates electron transfer from ubiquinol to cytochrome c. Contributes to the generation of a proton gradient across the mitochondrial membrane that is then used for ATP synthesis. This is Cytochrome b (mt-cyb) from Sphyrna tiburo tiburo (Hammerhead shark).